The primary structure comprises 287 residues: GTPase Era (287 aa).

Positions 11-174 (RSGFVAVIGR…RSYLASSLPE (164 aa)) constitute an Era-type G domain. Residues 19-26 (GRTNVGKS) and 66-70 (DTPGI) contribute to the GTP site. The KH type-2 domain occupies 205–273 (LRDELPQALA…PLTLRVKVQR (69 aa)).

It belongs to the TRAFAC class TrmE-Era-EngA-EngB-Septin-like GTPase superfamily. Era GTPase family. Monomer.

The protein resides in the cytoplasm. It is found in the cell membrane. An essential GTPase that binds both GDP and GTP, with rapid nucleotide exchange. Plays a role in 16S rRNA processing and 30S ribosomal subunit biogenesis and possibly also in cell cycle regulation and energy metabolism. The chain is GTPase Era from Acidimicrobium ferrooxidans (strain DSM 10331 / JCM 15462 / NBRC 103882 / ICP).